A 113-amino-acid polypeptide reads, in one-letter code: Protein crumbs homolog 3 (113 aa).

An N-terminal signal peptide occupies residues 1 to 24 (MATPGLGVLLAFGLPMLPSGWSLT). A disordered region spans residues 23–44 (LTAPDPFTNSTTQPPGDESNGG). At 25 to 49 (APDPFTNSTTQPPGDESNGGLSSGA) the chain is on the extracellular side. A glycan (N-linked (GlcNAc...) asparagine) is linked at N31. A helical membrane pass occupies residues 50–70 (IVAITVVFSILGVLLIAVGLF). Over 71–113 (LLMRKLREKRQTEGTYRPSSEEQVGARAPPPPNLKLPPEERLI) the chain is Cytoplasmic. The interaction with EPB41L5 stretch occupies residues 77 to 113 (REKRQTEGTYRPSSEEQVGARAPPPPNLKLPPEERLI). The interval 80–113 (RQTEGTYRPSSEEQVGARAPPPPNLKLPPEERLI) is disordered. Positions 83-92 (EGTYRPSSEE) are enriched in polar residues. The short motif at 110-113 (ERLI) is the PDZ-binding element.

As to quaternary structure, component of a complex composed of CRB3, PALS1 and PATJ. Interacts (via C-terminus) with PALS1 (via PDZ domain). Interacts with PARD6A. Interacts (via intracellular domain) with EPB41L5. Interacts with WDR83. Expressed in the apical renal tubules (at protein level). Expressed in the retinal pigment epithelium.

Its subcellular location is the apical cell membrane. It localises to the cell junction. The protein localises to the tight junction. Its function is as follows. Involved in the establishment of cell polarity in mammalian epithelial cells. Regulates the morphogenesis of tight junctions. Involved in promoting phosphorylation and cytoplasmic retention of transcriptional coactivators YAP1 and WWTR1/TAZ which leads to suppression of TGFB1-dependent transcription of target genes such as CCN2/CTGF, SERPINE1/PAI1, SNAI1/SNAIL1 and SMAD7. This chain is Protein crumbs homolog 3 (Crb3), found in Mus musculus (Mouse).